A 408-amino-acid chain; its full sequence is Ubiquitin-associated domain-containing protein 1 (408 aa).

The 85-residue stretch at 14–98 (LRLQVCTMEG…LLLIKKRAPP (85 aa)) folds into the Ubiquitin-like domain. A disordered region spans residues 100 to 119 (LPKMADVSAEEKRKQEQKAP). Residues 108 to 119 (AEEKRKQEQKAP) are compositionally biased toward basic and acidic residues. In terms of domain architecture, UBA 1 spans 185–231 (DEDEEDRVDEIALRQLTEMGFPESRAVKALRLNHMSVTQAMEWLIEH). The segment at 235–275 (PAVDAPLPGQTPSEAAAEAGASSAEATAGPSSEAGGEEAKD) is disordered. Residues 245 to 268 (TPSEAAAEAGASSAEATAGPSSEA) are compositionally biased toward low complexity. The region spanning 291–331 (RPDPRAVIALMEMGFDEKEVVDALRVNNNQQNAACEWLLGD) is the UBA 2 domain. The STI1 domain maps to 356–395 (NPVVQLGLTNPKTLLAFEDMLENPLNSTQWMNDPETGPVM).

In terms of assembly, component of the KPC complex.

It localises to the cytoplasm. The protein operates within protein modification; protein ubiquitination. Functionally, non-catalytic component of the KPC complex, a E3 ubiquitin-protein ligase complex that mediates polyubiquitination of target proteins, such as CDKN1B and NFKB1. Within the KPC complex, UBAC1 acts as an adapter that promotes the transfer of target proteins that have been polyubiquitinated by RNF123/KPC1 to the 26S proteasome. This chain is Ubiquitin-associated domain-containing protein 1 (UBAC1), found in Gallus gallus (Chicken).